The following is a 321-amino-acid chain: Glucokinase (321 aa).

8-13 (ADIGGT) is an ATP binding site.

It belongs to the bacterial glucokinase family.

The protein resides in the cytoplasm. It catalyses the reaction D-glucose + ATP = D-glucose 6-phosphate + ADP + H(+). The chain is Glucokinase from Paramagnetospirillum magneticum (strain ATCC 700264 / AMB-1) (Magnetospirillum magneticum).